Consider the following 140-residue polypeptide: Large ribosomal subunit protein uL16 (140 aa).

Positions 1–16 are enriched in basic residues; sequence MLMPKRVKHRKQMKGR. The disordered stretch occupies residues 1 to 20; the sequence is MLMPKRVKHRKQMKGRMKGD.

Belongs to the universal ribosomal protein uL16 family. As to quaternary structure, part of the 50S ribosomal subunit.

Functionally, binds 23S rRNA and is also seen to make contacts with the A and possibly P site tRNAs. In Geobacter sulfurreducens (strain ATCC 51573 / DSM 12127 / PCA), this protein is Large ribosomal subunit protein uL16.